Reading from the N-terminus, the 52-residue chain is Repressor-like protein SSo7c3 (52 aa).

Residues 4-51 (EEVVKVSRNYQVTIPAKVRQKFPVKEGDLVKVIYDENGGVVKIQILDS) enclose the SpoVT-AbrB domain.

This Saccharolobus solfataricus (strain ATCC 35092 / DSM 1617 / JCM 11322 / P2) (Sulfolobus solfataricus) protein is Repressor-like protein SSo7c3.